Reading from the N-terminus, the 736-residue chain is DNA topoisomerase 4 subunit A (736 aa).

In terms of domain architecture, Topo IIA-type catalytic spans 32-496; the sequence is LPDVRDGLKP…SFEQVTLTNQ (465 aa). The active-site O-(5'-phospho-DNA)-tyrosine intermediate is Y120.

This sequence belongs to the type II topoisomerase GyrA/ParC subunit family. ParC type 1 subfamily. In terms of assembly, heterotetramer composed of ParC and ParE.

The protein localises to the cell membrane. The enzyme catalyses ATP-dependent breakage, passage and rejoining of double-stranded DNA.. Topoisomerase IV is essential for chromosome segregation. It relaxes supercoiled DNA. Performs the decatenation events required during the replication of a circular DNA molecule. This Rickettsia bellii (strain RML369-C) protein is DNA topoisomerase 4 subunit A.